We begin with the raw amino-acid sequence, 209 residues long: Ras-related protein Rab-2-A (209 aa).

Gly-13 to Cys-21 lines the GTP pocket. The Effector region signature appears at His-35–Phe-43. Residues Asp-61–Gln-65, Asn-119–Asp-122, and Ser-149–Lys-151 contribute to the GTP site. Residues Cys-207 and Cys-208 are each lipidated (S-geranylgeranyl cysteine).

It belongs to the small GTPase superfamily. Rab family.

The protein resides in the endoplasmic reticulum membrane. The protein localises to the golgi apparatus membrane. Its function is as follows. Protein transport. Probably involved in vesicular traffic. This Zea mays (Maize) protein is Ras-related protein Rab-2-A (RAB2A).